The primary structure comprises 380 residues: Acyl-lipid (9+3)-(E)-desaturase (380 aa).

The tract at residues 1–25 (MGAGGCISVSETKPNQKNSLERAPY) is disordered. The segment covering 9–18 (VSETKPNQKN) has biased composition (polar residues). The next 2 helical transmembrane spans lie at 52–72 (LSYV…TTYF) and 81–101 (ALAW…VWVI). The Histidine box-1 signature appears at 103 to 107 (HECGH). The Histidine box-2 motif lies at 139-143 (HRRHH). 3 consecutive transmembrane segments (helical) span residues 177 to 197 (IGVL…FNVS), 223 to 243 (IYLS…AAMV), and 247 to 267 (VWLI…LVLV). Residues 313–317 (HIVHH) carry the Histidine box-3 motif.

It belongs to the fatty acid desaturase type 1 family.

Its subcellular location is the membrane. It catalyses the reaction a (9Z)-octadecenoyl-containing glycerolipid + 2 Fe(II)-[cytochrome b5] + O2 + 2 H(+) = a (9Z,12E)-octadecadienoyl-containing glycerolipid + 2 Fe(III)-[cytochrome b5] + 2 H2O. It carries out the reaction a (9Z)-hexadecenoyl-containing glycerolipid + 2 Fe(II)-[cytochrome b5] + O2 + 2 H(+) = a (9Z,12E)-hexadecadienoyl-containing glycerolipid + 2 Fe(III)-[cytochrome b5] + 2 H2O. Functionally, involved in the biosynthesis of dimorphecolic acid (9-OH-18:2(10E,12E)). Converts oleic acid (18:1(9Z)) into 18:2(9Z,12E) and probably palmitoleic acid (16:1(9Z)) into 16:2(9Z,12E). Very limited ability to catalyze (Z)-delta(12) desaturation. The protein is Acyl-lipid (9+3)-(E)-desaturase of Dimorphotheca sinuata (African daisy).